Consider the following 623-residue polypeptide: UvrABC system protein C (623 aa).

Residues Pro12 to Ile91 form the GIY-YIG domain. In terms of domain architecture, UVR spans Thr201–Thr236. A disordered region spans residues Arg603–Lys623.

It belongs to the UvrC family. Interacts with UvrB in an incision complex.

The protein localises to the cytoplasm. In terms of biological role, the UvrABC repair system catalyzes the recognition and processing of DNA lesions. UvrC both incises the 5' and 3' sides of the lesion. The N-terminal half is responsible for the 3' incision and the C-terminal half is responsible for the 5' incision. This Citrifermentans bemidjiense (strain ATCC BAA-1014 / DSM 16622 / JCM 12645 / Bem) (Geobacter bemidjiensis) protein is UvrABC system protein C.